Consider the following 760-residue polypeptide: General transcription and DNA repair factor IIH helicase subunit XPD (760 aa).

The 277-residue stretch at 7 to 283 (GLLVYFPYDY…KETDEQRLRD (277 aa)) folds into the Helicase ATP-binding domain. 42–49 (MPSGTGKT) serves as a coordination point for ATP. 4 residues coordinate [4Fe-4S] cluster: cysteine 116, cysteine 134, cysteine 155, and cysteine 190. Positions 234–237 (DEAH) match the DEAH box motif. The interval 438–637 (MDASLAIKPV…TQSRILKARL (200 aa)) is mediates interaction with MMS19. Positions 682 to 695 (KRFARADKRGKLPR) match the Nuclear localization signal motif.

Belongs to the helicase family. RAD3/XPD subfamily. As to quaternary structure, component of the 7-subunit TFIIH core complex composed of XPB/ERCC3, XPD/ERCC2, GTF2H1, GTF2H2, GTF2H3, GTF2H4 and GTF2H5, which is active in NER. The core complex associates with the 3-subunit CDK-activating kinase (CAK) module composed of CCNH/cyclin H, CDK7 and MNAT1 to form the 10-subunit holoenzyme (holo-TFIIH) active in transcription. The interaction with GTF2H2 results in the stimulation of the 5'--&gt;3' helicase activity. Component of the MMXD complex, which includes CIAO1, ERCC2, CIAO2B, MMS19 and SLC25A5. Interacts with CIAO1 and CIAO2B; the interaction WITH CIAO2B is direct. Interacts with ATF7IP. Interacts directly with MMS19. Part of TBP-based Pol II pre-initiation complex (PIC), in which Pol II core assembles with general transcription factors and other specific initiation factors including GTF2E1, GTF2E2, GTF2F1, GTF2F2, TCEA1, ERCC2, ERCC3, GTF2H2, GTF2H3, GTF2H4, GTF2H5, GTF2A1, GTF2A2, GTF2B and TBP; this large multi-subunit PIC complex mediates DNA unwinding and targets Pol II core to the transcription start site where the first phosphodiester bond forms. The cofactor is Mg(2+). [4Fe-4S] cluster serves as cofactor. Post-translationally, ISGylated.

It localises to the nucleus. It is found in the cytoplasm. Its subcellular location is the cytoskeleton. The protein resides in the spindle. The enzyme catalyses Couples ATP hydrolysis with the unwinding of duplex DNA at the replication fork by translocating in the 5'-3' direction. This creates two antiparallel DNA single strands (ssDNA). The leading ssDNA polymer is the template for DNA polymerase III holoenzyme which synthesizes a continuous strand.. It carries out the reaction ATP + H2O = ADP + phosphate + H(+). Functionally, ATP-dependent 5'-3' DNA helicase. Component of the general transcription and DNA repair factor IIH (TFIIH) core complex which is involved in general and transcription-coupled nucleotide excision repair (NER) of damaged DNA. When complexed to CDK-activating kinase (CAK), involved in transcription by RNA polymerase II. In NER, TFIIH acts by opening DNA around the lesion to allow the excision of the damaged oligonucleotide and its replacement by a new DNA fragment. The ATP-dependent helicase activity of XPD/ERCC2 is required for DNA opening. In transcription, TFIIH has an essential role in transcription initiation. When the pre-initiation complex (PIC) has been established, TFIIH is required for promoter opening and promoter escape. Phosphorylation of the C-terminal tail (CTD) of the largest subunit of RNA polymerase II by the kinase module CAK controls the initiation of transcription. XPD/ERCC2 acts by forming a bridge between CAK and the core-TFIIH complex. Involved in the regulation of vitamin-D receptor activity. As part of the mitotic spindle-associated MMXD complex it plays a role in chromosome segregation. Might have a role in aging process and could play a causative role in the generation of skin cancers. The chain is General transcription and DNA repair factor IIH helicase subunit XPD from Cricetulus griseus (Chinese hamster).